Here is a 289-residue protein sequence, read N- to C-terminus: ATP phosphoribosyltransferase (289 aa).

The protein belongs to the ATP phosphoribosyltransferase family. Long subfamily. Mg(2+) is required as a cofactor.

It is found in the cytoplasm. It catalyses the reaction 1-(5-phospho-beta-D-ribosyl)-ATP + diphosphate = 5-phospho-alpha-D-ribose 1-diphosphate + ATP. The protein operates within amino-acid biosynthesis; L-histidine biosynthesis; L-histidine from 5-phospho-alpha-D-ribose 1-diphosphate: step 1/9. Feedback inhibited by histidine. Its function is as follows. Catalyzes the condensation of ATP and 5-phosphoribose 1-diphosphate to form N'-(5'-phosphoribosyl)-ATP (PR-ATP). Has a crucial role in the pathway because the rate of histidine biosynthesis seems to be controlled primarily by regulation of HisG enzymatic activity. This is ATP phosphoribosyltransferase from Pelotomaculum thermopropionicum (strain DSM 13744 / JCM 10971 / SI).